The sequence spans 162 residues: MELVQQLIADYGYLAIFLMLVLGIVGLPIPDEVMMTVVGYFTHTDVLNYELSILISFVGALLGMLISYMIGRKAGRPFIDKYGKWVGLKEKRMMKVEKWMKKYGPYSLILGYFIPGVRHVTCYFSGIGKMDLKTYVAFAAIGAFLWCFVFITIGRVIGIIHV.

The next 3 helical transmembrane spans lie at 7-27 (LIAD…IVGL), 51-71 (LSIL…YMIG), and 134-154 (TYVA…ITIG).

The protein belongs to the DedA family.

It localises to the cell membrane. This is an uncharacterized protein from Bacillus subtilis (strain 168).